Consider the following 774-residue polypeptide: Beta-D-xylosidase 1 (774 aa).

The N-terminal stretch at methionine 1–serine 30 is a signal peptide. Asparagine 131 carries an N-linked (GlcNAc...) asparagine glycan. The active site involves aspartate 296. Asparagine 658 is a glycosylation site (N-linked (GlcNAc...) asparagine).

The protein belongs to the glycosyl hydrolase 3 family. As to expression, expressed in leaves, stems, seedlings, roots, inflorescences, siliques and developing seeds. Expressed in the vasculature of the roots, leaves, flowers and silique. Expressed in tissues undergoing secondary cell wall thickening such as protoxylem, metaxylem, intrafascicular cambium and fibers.

Its subcellular location is the secreted. The protein localises to the extracellular space. It is found in the extracellular matrix. It carries out the reaction Hydrolysis of terminal non-reducing alpha-L-arabinofuranoside residues in alpha-L-arabinosides.. Involved in pectic arabinan modification in mucilage secretory cells. Also acts as a beta-D-xylosidase during the remodeling of xylans in vascular development. The polypeptide is Beta-D-xylosidase 1 (BXL1) (Arabidopsis thaliana (Mouse-ear cress)).